A 155-amino-acid polypeptide reads, in one-letter code: Small ribosomal subunit protein uS7 (155 aa).

It belongs to the universal ribosomal protein uS7 family. As to quaternary structure, part of the 30S ribosomal subunit. Contacts proteins S9 and S11.

In terms of biological role, one of the primary rRNA binding proteins, it binds directly to 16S rRNA where it nucleates assembly of the head domain of the 30S subunit. Is located at the subunit interface close to the decoding center, probably blocks exit of the E-site tRNA. The sequence is that of Small ribosomal subunit protein uS7 from Lactococcus lactis subsp. lactis (strain IL1403) (Streptococcus lactis).